Consider the following 385-residue polypeptide: MAMKLNALMTLQCPKRNMFTRIAPPQAGRVRSKVSMASTLHASPLVFDKLKAGRPEVDELFNSLEGWARDNILVHLKSVENSWQPQDYLPDPTSDAFEDQVKEMRERAKDIPDEYFVVLVGDMITEEALPTYMSMLNRCDGIKDDTGAQPTSWATWTRAWTAEENRHGDLLNKYLYLSGRVDMRMIEKTIQYLIGSGMDTKTENCPYMGFIYTSFQERATFISHANTAKLAQHYGDKNLAQVCGNIASDEKRHATAYTKIVEKLAEIDPDTTVIAFSDMMRKKIQMPAHAMYDGSDDMLFKHFTAVAQQIGVYSAWDYCDIIDFLVDKWNVAKMTGLSGEGRKAQEYVCSLAAKIRRVEEKVQGKEKKAVLPVAFSWIFNRQIII.

A chloroplast-targeting transit peptide spans 1-36; sequence MAMKLNALMTLQCPKRNMFTRIAPPQAGRVRSKVSM. Glu-126, Glu-164, His-167, Glu-217, Glu-250, and His-253 together coordinate Fe cation.

Belongs to the fatty acid desaturase type 2 family. In terms of assembly, homodimer. Fe(2+) serves as cofactor. As to expression, found only in tissues which synthesize petroselinic acid, such as developing seeds.

It is found in the plastid. It localises to the chloroplast. It catalyses the reaction hexadecanoyl-[ACP] + 2 reduced [2Fe-2S]-[ferredoxin] + O2 + 2 H(+) = (4Z)-hexadecenoyl-[ACP] + 2 oxidized [2Fe-2S]-[ferredoxin] + 2 H2O. Converts palmitoyl-ACP to (4Z)-hexadec-4-enoyl-ACP by introduction of a cis double bond between carbons 4 and 5 of the acyl chain. This chain is Palmitoyl-[acyl-carrier-protein] 4-desaturase, chloroplastic, found in Coriandrum sativum (Coriander).